The chain runs to 304 residues: 2-oxoacid:ferredoxin oxidoreductase 2, subunit beta (304 aa).

3 residues coordinate [4Fe-4S] cluster: cysteine 12, cysteine 15, and cysteine 46. Residues 44 to 47 (IGCS) and histidine 65 contribute to the thiamine diphosphate site. Residue aspartate 90 coordinates Mg(2+). 91-92 (GD) contacts thiamine diphosphate. Mg(2+)-binding residues include asparagine 118 and valine 120. 122–123 (GL) provides a ligand contact to thiamine diphosphate. Cysteine 197 lines the [4Fe-4S] cluster pocket.

Heterodimer composed of an alpha and a beta subunit. It depends on [4Fe-4S] cluster as a cofactor. Thiamine diphosphate is required as a cofactor. Requires Mg(2+) as cofactor.

The catalysed reaction is a 2-oxocarboxylate + 2 oxidized [2Fe-2S]-[ferredoxin] + CoA = an acyl-CoA + 2 reduced [2Fe-2S]-[ferredoxin] + CO2 + H(+). Catalyzes the coenzyme A-dependent oxidative decarboxylation of different 2-oxoacids such as 2-oxoglutarate, pyruvate and 2-oxobutyrate to form their CoA derivatives. The chain is 2-oxoacid:ferredoxin oxidoreductase 2, subunit beta from Sulfurisphaera tokodaii (strain DSM 16993 / JCM 10545 / NBRC 100140 / 7) (Sulfolobus tokodaii).